Reading from the N-terminus, the 194-residue chain is Cysteine and glycine-rich protein 3 (194 aa).

The tract at residues 1 to 5 (MPNWG) is interaction with TCAP. The 52-residue stretch at 10 to 61 (CGACEKTVYHAEEIQCNGRSFHKTCFHCMACRKALDSTTVAAHESEIYCKVC) folds into the LIM zinc-binding 1 domain. The Nuclear localization signal motif lies at 64–69 (RRYGPK). Positions 94–105 (QSPKPARAATTS) are interaction with CLF2. 3 positions are modified to phosphoserine: Ser95, Ser111, and Ser153. The 52-residue stretch at 120 to 171 (CPRCGKSVYAAEKVMGGGKPWHKTCFRCAICGKSLESTNVTDKDGELYCKVC) folds into the LIM zinc-binding 2 domain.

Self-associates. Oligomeric in the cytoplasm and monomeric in the nucleus. Homooligomers preferentially form along the actin cytoskeleton. Interacts with TCAP. Interacts with LDHD, MYOD1, MYOG, ACTN2, NRAP, MYF6. Interacts (via N-terminus)D with GLRX3 (via C-terminus) and PPP3CA; GLRX3 and calcineurin compete for interaction with CSRP3. Interacts with CFL2; the stoichiometry influences F-actin depolymerization and possibly two molecules of CFL2 can interact with one molecule of CSRP3 resulting in the highest functional impact; the interaction is stronger with phosphorylated CFL2. In terms of processing, phosphorylated by PKC/PRKCA.

The protein localises to the nucleus. Its subcellular location is the cytoplasm. It is found in the cytoskeleton. It localises to the myofibril. The protein resides in the sarcomere. The protein localises to the z line. In terms of biological role, positive regulator of myogenesis. Acts as a cofactor for myogenic bHLH transcription factors such as MYOD1, and probably MYOG and MYF6. Enhances the DNA-binding activity of the MYOD1:TCF3 isoform E47 complex and may promote formation of a functional MYOD1:TCF3 isoform E47:MEF2A complex involved in myogenesis. Plays a crucial and specific role in the organization of cytosolic structures in cardiomyocytes. Could play a role in mechanical stretch sensing. May be a scaffold protein that promotes the assembly of interacting proteins at Z-line structures. It is essential for calcineurin anchorage to the Z line. Required for stress-induced calcineurin-NFAT activation. The role in regulation of cytoskeleton dynamics by association with CFL2 is reported conflictingly. Proposed to contribute to the maintenance of muscle cell integrity through an actin-based mechanism. Can directly bind to actin filaments, cross-link actin filaments into bundles without polarity selectivity and protect them from dilution- and cofilin-mediated depolymerization; the function seems to involve its self-association. In vitro can inhibit PKC/PRKCA activity. Proposed to be involved in cardiac stress signaling by down-regulating excessive PKC/PRKCA signaling. In Mus musculus (Mouse), this protein is Cysteine and glycine-rich protein 3 (Csrp3).